A 211-amino-acid polypeptide reads, in one-letter code: Uridine kinase (211 aa).

12–19 is a binding site for ATP; sequence GGSGSGKT.

The protein belongs to the uridine kinase family.

The protein localises to the cytoplasm. It catalyses the reaction uridine + ATP = UMP + ADP + H(+). The catalysed reaction is cytidine + ATP = CMP + ADP + H(+). It participates in pyrimidine metabolism; CTP biosynthesis via salvage pathway; CTP from cytidine: step 1/3. Its pathway is pyrimidine metabolism; UMP biosynthesis via salvage pathway; UMP from uridine: step 1/1. In Bacillus subtilis (strain 168), this protein is Uridine kinase (udk).